A 95-amino-acid polypeptide reads, in one-letter code: MGRIAYKSVIMLSLQPSCVKSNCQGDGDVPGQNTRGAPSPFLFPFSVFSDPIHPGITPILPKTANQPSARATTGLIRDPCCKTYLYVFGFTRNNA.

This is an uncharacterized protein from Escherichia coli (strain K12).